A 1382-amino-acid chain; its full sequence is MATGGRRGAAAAPLLVAVAALLLGAAGHLYPGEVCPGMDIRNNLTRLHELENCSVIEGHLQILLMFKTRPEDFRDLSFPKLIMITDYLLLFRVYGLESLKDLFPNLTVIRGSRLFFNYALVIFEMVHLKELGLYNLMNITRGSVRIEKNNELCYLATIDWSRILDSVEDNYIVLNKDDNEECGDICPGTAKGKTNCPATVINGQFVERCWTHSHCQKVCPTICKSHGCTAEGLCCHSECLGNCSQPDDPTKCVACRNFYLDGRCVETCPPPYYHFQDWRCVNFSFCQDLHHKCKNSRRQGCHQYVIHNNKCIPECPSGYTMNSSNLLCTPCLGPCPKVCHLLEGEKTIDSVTSAQELRGCTVINGSLIINIRGGNNLAAELEANLGLIEEISGYLKIRRSYALVSLSFFRKLRLIRGETLEIGNYSFYALDNQNLRQLWDWSKHNLTITQGKLFFHYNPKLCLSEIHKMEEVSGTKGRQERNDIALKTNGDQASCENELLKFSYIRTSFDKILLRWEPYWPPDFRDLLGFMLFYKEAPYQNVTEFDGQDACGSNSWTVVDIDPPLRSNDPKSQNHPGWLMRGLKPWTQYAIFVKTLVTFSDERRTYGAKSDIIYVQTDATNPSVPLDPISVSNSSSQIILKWKPPSDPNGNITHYLVFWERQAEDSELFELDYCLKGLKLPSRTWSPPFESEDSQKHNQSEYEDSAGECCSCPKTDSQILKELEESSFRKTFEDYLHNVVFVPRKTSSGTGAEDPRPSRKRRSLGDVGNVTVAVPTVAAFPNTSSTSVPTSPEEHRPFEKVVNKESLVISGLRHFTGYRIELQACNQDTPEERCSVAAYVSARTMPEAKADDIVGPVTHEIFENNVVHLMWQEPKEPNGLIVLYEVSYRRYGDEELHLCVSRKHFALERGCRLRGLSPGNYSVRIRATSLAGNGSWTEPTYFYVTDYLDVPSNIAKIIIGPLIFVFLFSVVIGSIYLFLRKRQPDGPLGPLYASSNPEYLSASDVFPCSVYVPDEWEVSREKITLLRELGQGSFGMVYEGNARDIIKGEAETRVAVKTVNESASLRERIEFLNEASVMKGFTCHHVVRLLGVVSKGQPTLVVMELMAHGDLKSYLRSLRPEAENNPGRPPPTLQEMIQMAAEIADGMAYLNAKKFVHRDLAARNCMVAHDFTVKIGDFGMTRDIYETDYYRKGGKGLLPVRWMAPESLKDGVFTTSSDMWSFGVVLWEITSLAEQPYQGLSNEQVLKFVMDGGYLDQPDNCPERVTDLMRMCWQFNPKMRPTFLEIVNLLKDDLHPSFPEVSFFHSEENKAPESEELEMEFEDMENVPLDRSSHCQREEAGGRDGGSSLGFKRSYEEHIPYTHMNGGKKNGRILTLPRSNPS.

Residues methionine 1 to glycine 27 form the signal peptide. 2 consecutive stretches face the extracellular side: residues histidine 28–serine 758 and serine 763–lysine 956. Cysteine 35 and cysteine 53 are oxidised to a cystine. 4 N-linked (GlcNAc...) asparagine glycosylation sites follow: asparagine 43, asparagine 52, asparagine 105, and asparagine 138. 9 disulfides stabilise this stretch: cysteine 153/cysteine 182, cysteine 186/cysteine 209, cysteine 196/cysteine 215, cysteine 219/cysteine 228, cysteine 223/cysteine 234, cysteine 235/cysteine 243, cysteine 239/cysteine 252, cysteine 255/cysteine 264, and cysteine 268/cysteine 280. A glycan (N-linked (GlcNAc...) asparagine) is linked at asparagine 242. A glycan (N-linked (GlcNAc...) asparagine) is linked at asparagine 282. Cystine bridges form between cysteine 286–cysteine 311, cysteine 293–cysteine 301, cysteine 315–cysteine 328, cysteine 331–cysteine 335, and cysteine 339–cysteine 360. Asparagine 322 carries N-linked (GlcNAc...) asparagine glycosylation. Asparagine 364 carries N-linked (GlcNAc...) asparagine glycosylation. Position 400 is a phosphoserine (serine 400). Residue tyrosine 401 is modified to Phosphotyrosine. Position 407 is a phosphoserine (serine 407). Asparagine 424 and asparagine 445 each carry an N-linked (GlcNAc...) asparagine glycan. A disulfide bridge links cysteine 462 with cysteine 495. N-linked (GlcNAc...) asparagine glycans are attached at residues asparagine 541, asparagine 633, asparagine 651, and asparagine 698. In terms of domain architecture, Fibronectin type-III 1 spans valine 624–serine 726. 2 disulfide bridges follow: cysteine 674-cysteine 899 and cysteine 825-cysteine 834. The interval serine 686–glutamate 708 is disordered. The insulin-binding stretch occupies residues glutamate 733–phenylalanine 741. Positions threonine 746–aspartate 766 are disordered. Fibronectin type-III domains follow at residues proline 757–alanine 842 and isoleucine 853–tyrosine 947. N-linked (GlcNAc...) asparagine glycosylation is found at asparagine 769 and asparagine 782. 2 N-linked (GlcNAc...) asparagine glycosylation sites follow: asparagine 920 and asparagine 933. The helical transmembrane segment at isoleucine 957 to leucine 979 threads the bilayer. At arginine 980 to serine 1382 the chain is on the cytoplasmic side. Phosphotyrosine; by autocatalysis is present on residues tyrosine 992, tyrosine 999, and tyrosine 1011. A region of interest (important for interaction with IRS1, SHC1 and STAT5B) is located at residue tyrosine 999. One can recognise a Protein kinase domain in the interval isoleucine 1023 to phenylalanine 1298. The ATP site is built by serine 1033 and lysine 1057. Lysine 1079 participates in a covalent cross-link: Glycyl lysine isopeptide (Lys-Gly) (interchain with G-Cter in ubiquitin). Cysteine 1083 carries the S-nitrosocysteine modification. Glutamate 1104 to aspartate 1110 is a binding site for ATP. Aspartate 1159 (proton donor/acceptor) is an active-site residue. ATP is bound by residues arginine 1163–asparagine 1164 and aspartate 1177. Residues tyrosine 1185, tyrosine 1189, tyrosine 1190, tyrosine 1355, and tyrosine 1361 each carry the phosphotyrosine; by autocatalysis modification. Residues proline 1360–serine 1382 form a disordered region. The interval tyrosine 1361–methionine 1364 is PIK3R1-binding.

It belongs to the protein kinase superfamily. Tyr protein kinase family. Insulin receptor subfamily. As to quaternary structure, tetramer of 2 alpha and 2 beta chains linked by disulfide bonds. The alpha chains carry the insulin-binding regions, while the beta chains carry the kinase domain. Forms a hybrid receptor with IGF1R, the hybrid is a tetramer consisting of 1 alpha chain and 1 beta chain of INSR and 1 alpha chain and 1 beta chain of IGF1R. Interacts with SORBS1 but dissociates from it following insulin stimulation. Binds SH2B2. Activated form of INSR interacts (via Tyr-999) with the PTB/PID domains of IRS1 and SHC1. The sequences surrounding the phosphorylated NPXY motif contribute differentially to either IRS1 or SHC1 recognition. Interacts (via tyrosines in the C-terminus) with IRS2 (via PTB domain and 591-786 AA); the 591-786 would be the primary anchor of IRS2 to INSR while the PTB domain would have a stabilizing action on the interaction with INSR. Interacts with the SH2 domains of the 85 kDa regulatory subunit of PI3K (PIK3R1) in vitro, when autophosphorylated on tyrosine residues. Interacts with SOCS7. Interacts (via the phosphorylated Tyr-999), with SOCS3. Interacts (via the phosphorylated Tyr-1185, Tyr-1189, Tyr-1190) with SOCS1. Interacts with CAV2 (tyrosine-phosphorylated form); the interaction is increased with 'Tyr-27'phosphorylation of CAV2. Interacts with ARRB2. Interacts with GRB10; this interaction blocks the association between IRS1/IRS2 and INSR, significantly reduces insulin-stimulated tyrosine phosphorylation of IRS1 and IRS2 and thus decreases insulin signaling. Interacts with GRB7. Interacts with PDPK1. Interacts (via Tyr-1190) with GRB14 (via BPS domain); this interaction protects the tyrosines in the activation loop from dephosphorylation, but promotes dephosphorylation of Tyr-999, this results in decreased interaction with, and phosphorylation of, IRS1. Interacts (via subunit alpha) with ENPP1 (via 485-599 AA); this interaction blocks autophosphorylation. Interacts with PTPRE; this interaction is dependent of Tyr-1185, Tyr-1189 and Tyr-1190 of the INSR. Interacts with STAT5B (via SH2 domain). Interacts with PTPRF. Interacts with ATIC; ATIC together with PRKAA2/AMPK2 and HACD3/PTPLAD1 is proposed to be part of a signaling netwok regulating INSR autophosphorylation and endocytosis. Interacts with the cone snail venom insulin Con-Ins G1. Interacts with the insulin receptor SORL1; this interaction strongly increases its surface exposure, hence strengthens insulin signal reception. Interacts (tyrosine phosphorylated) with CCDC88A/GIV (via SH2-like region); binding requires autophosphorylation of the INSR C-terminal region. Interacts with GNAI3; the interaction is probably mediated by CCDC88A/GIV. Interacts with LMBRD1. Interacts (in response to insulin stimulation) with NCK1; this interaction may recruit PTPN1 to mediate INSR dephosphorylation. Interacts with CD248; this interaction diminishes INSR autophosphorylation. Post-translationally, after being transported from the endoplasmic reticulum to the Golgi apparatus, the single glycosylated precursor is further glycosylated and then cleaved, followed by its transport to the plasma membrane. Autophosphorylated on tyrosine residues in response to insulin. Phosphorylation of Tyr-999 is required for binding to IRS1, SHC1 and STAT5B. Dephosphorylated by PTPRE at Tyr-999, Tyr-1185, Tyr-1189 and Tyr-1190. May also be phosphorylated at Tyr-1185 and Tyr-1190 by mTORC2. Dephosphorylated by PTPRF and PTPN1. Dephosphorylated by PTPN2; down-regulates insulin-induced signaling. Dephosphorylation at Tyr-1189 and Tyr-1190 requires the SH2/SH3 adapter protein NCK1, probably to recruit its interaction partner PTPN1. In terms of processing, S-nitrosylation at Cys-1083 by BLVRB inhibits the receptor tyrosine kinase, thereby inhibiting insulin signaling. Post-translationally, ubiquitinated by MARCHF1; leading to degradation thereby reducing surface INSR expression. Isoform Long and isoform Short are predominantly expressed in tissue targets of insulin metabolic effects: liver, adipose tissue and skeletal muscle but are also expressed in the peripheral nerve, kidney, pulmonary alveoli, pancreatic acini, placenta vascular endothelium, fibroblasts, monocytes, granulocytes, erythrocytes and skin. Isoform Short is preferentially expressed in fetal cells such as fetal fibroblasts, muscle, liver and kidney. Found as a hybrid receptor with IGF1R in muscle, heart, kidney, adipose tissue, skeletal muscle, hepatoma, fibroblasts, spleen and placenta (at protein level). Overexpressed in several tumors, including breast, colon, lung, ovary, and thyroid carcinomas.

It is found in the cell membrane. Its subcellular location is the late endosome. It localises to the lysosome. The enzyme catalyses L-tyrosyl-[protein] + ATP = O-phospho-L-tyrosyl-[protein] + ADP + H(+). With respect to regulation, activated in response to insulin. Autophosphorylation activates the kinase activity. PTPN1, PTPRE and PTPRF dephosphorylate important tyrosine residues, thereby reducing INSR activity. Inhibited by ENPP1. GRB10 and GRB14 inhibit the catalytic activity of the INSR, they block access of substrates to the activated receptor. SOCS1 and SOCS3 act as negative regulators of INSR activity, they bind to the activated INRS and interfere with the phosphorylation of INSR substrates. Functionally, receptor tyrosine kinase which mediates the pleiotropic actions of insulin. Binding of insulin leads to phosphorylation of several intracellular substrates, including, insulin receptor substrates (IRS1, 2, 3, 4), SHC, GAB1, CBL and other signaling intermediates. Each of these phosphorylated proteins serve as docking proteins for other signaling proteins that contain Src-homology-2 domains (SH2 domain) that specifically recognize different phosphotyrosine residues, including the p85 regulatory subunit of PI3K and SHP2. Phosphorylation of IRSs proteins lead to the activation of two main signaling pathways: the PI3K-AKT/PKB pathway, which is responsible for most of the metabolic actions of insulin, and the Ras-MAPK pathway, which regulates expression of some genes and cooperates with the PI3K pathway to control cell growth and differentiation. Binding of the SH2 domains of PI3K to phosphotyrosines on IRS1 leads to the activation of PI3K and the generation of phosphatidylinositol-(3, 4, 5)-triphosphate (PIP3), a lipid second messenger, which activates several PIP3-dependent serine/threonine kinases, such as PDPK1 and subsequently AKT/PKB. The net effect of this pathway is to produce a translocation of the glucose transporter SLC2A4/GLUT4 from cytoplasmic vesicles to the cell membrane to facilitate glucose transport. Moreover, upon insulin stimulation, activated AKT/PKB is responsible for: anti-apoptotic effect of insulin by inducing phosphorylation of BAD; regulates the expression of gluconeogenic and lipogenic enzymes by controlling the activity of the winged helix or forkhead (FOX) class of transcription factors. Another pathway regulated by PI3K-AKT/PKB activation is mTORC1 signaling pathway which regulates cell growth and metabolism and integrates signals from insulin. AKT mediates insulin-stimulated protein synthesis by phosphorylating TSC2 thereby activating mTORC1 pathway. The Ras/RAF/MAP2K/MAPK pathway is mainly involved in mediating cell growth, survival and cellular differentiation of insulin. Phosphorylated IRS1 recruits GRB2/SOS complex, which triggers the activation of the Ras/RAF/MAP2K/MAPK pathway. In addition to binding insulin, the insulin receptor can bind insulin-like growth factors (IGFI and IGFII). Isoform Short has a higher affinity for IGFII binding. When present in a hybrid receptor with IGF1R, binds IGF1. PubMed:12138094 shows that hybrid receptors composed of IGF1R and INSR isoform Long are activated with a high affinity by IGF1, with low affinity by IGF2 and not significantly activated by insulin, and that hybrid receptors composed of IGF1R and INSR isoform Short are activated by IGF1, IGF2 and insulin. In contrast, PubMed:16831875 shows that hybrid receptors composed of IGF1R and INSR isoform Long and hybrid receptors composed of IGF1R and INSR isoform Short have similar binding characteristics, both bind IGF1 and have a low affinity for insulin. In adipocytes, inhibits lipolysis. This chain is Insulin receptor (INSR), found in Homo sapiens (Human).